A 1358-amino-acid chain; its full sequence is Mediator of RNA polymerase II transcription subunit 12 (1358 aa).

Positions 629 to 654 (VRYNYEQLQIQLNTAKEQMLQEQFEH) form a coiled coil.

Belongs to the Mediator complex subunit 12 family. As to quaternary structure, component of the SRB8-11 complex, which itself associates with the Mediator complex.

It is found in the nucleus. Functionally, component of the SRB8-11 complex. The SRB8-11 complex is a regulatory module of the Mediator complex which is itself involved in regulation of basal and activated RNA polymerase II-dependent transcription. The SRB8-11 complex may be involved in the transcriptional repression of a subset of genes regulated by Mediator. It may inhibit the association of the Mediator complex with RNA polymerase II to form the holoenzyme complex. The polypeptide is Mediator of RNA polymerase II transcription subunit 12 (SRB8) (Eremothecium gossypii (strain ATCC 10895 / CBS 109.51 / FGSC 9923 / NRRL Y-1056) (Yeast)).